Here is a 317-residue protein sequence, read N- to C-terminus: MKLSEIAQKTGASFSGEDIEIFALNSLKNANKAELSYCDGEKNAKFIAGSNAGAILISQNLTSFVPEGMSALVCENPHLAFAILSKDFAKPLFCEPKPSNIAESATIMSNAYIGSNVSVGEGSIVMAGVFLGDNVKIGQNCIIHPNVVIYNDCVIGDECHLLANCVIGSDGFGYAHTKTGEHVKIYHNGNVVLGDFVEVGACTTIDRGVFESTMIASYTKIDNLVQIGHNCELGNGCLIVSQTGLAGSTTLGRNVVMGGQSGSAGHVRVGDFAQIAARGGVSKDLDAGKKYAGAYPIMPLDEFFKIQAKILRFFKKN.

Histidine 229 acts as the Proton acceptor in catalysis.

This sequence belongs to the transferase hexapeptide repeat family. LpxD subfamily. Homotrimer.

The enzyme catalyses a UDP-3-O-[(3R)-3-hydroxyacyl]-alpha-D-glucosamine + a (3R)-hydroxyacyl-[ACP] = a UDP-2-N,3-O-bis[(3R)-3-hydroxyacyl]-alpha-D-glucosamine + holo-[ACP] + H(+). Its pathway is bacterial outer membrane biogenesis; LPS lipid A biosynthesis. Functionally, catalyzes the N-acylation of UDP-3-O-acylglucosamine using 3-hydroxyacyl-ACP as the acyl donor. Is involved in the biosynthesis of lipid A, a phosphorylated glycolipid that anchors the lipopolysaccharide to the outer membrane of the cell. The protein is UDP-3-O-acylglucosamine N-acyltransferase of Campylobacter curvus (strain 525.92).